The chain runs to 190 residues: Peptidyl-tRNA hydrolase (190 aa).

Tyrosine 14 provides a ligand contact to tRNA. Histidine 19 acts as the Proton acceptor in catalysis. Tyrosine 64, asparagine 66, and asparagine 112 together coordinate tRNA.

The protein belongs to the PTH family. In terms of assembly, monomer.

Its subcellular location is the cytoplasm. The catalysed reaction is an N-acyl-L-alpha-aminoacyl-tRNA + H2O = an N-acyl-L-amino acid + a tRNA + H(+). Its function is as follows. Hydrolyzes ribosome-free peptidyl-tRNAs (with 1 or more amino acids incorporated), which drop off the ribosome during protein synthesis, or as a result of ribosome stalling. Functionally, catalyzes the release of premature peptidyl moieties from peptidyl-tRNA molecules trapped in stalled 50S ribosomal subunits, and thus maintains levels of free tRNAs and 50S ribosomes. The polypeptide is Peptidyl-tRNA hydrolase (Chlorobium phaeobacteroides (strain DSM 266 / SMG 266 / 2430)).